Reading from the N-terminus, the 168-residue chain is Pollen allergen Che a 1 (168 aa).

The N-terminal stretch at 1 to 25 (MAKCQAVFLLVGALCVLSLAGVANA) is a signal peptide. Cystine bridges form between cysteine 38–cysteine 109, cysteine 41–cysteine 153, and cysteine 62–cysteine 97. An N-linked (GlcNAc...) asparagine glycan is attached at asparagine 64.

This sequence belongs to the Ole e I family.

Its subcellular location is the secreted. The sequence is that of Pollen allergen Che a 1 from Chenopodium album (Fat hen).